Here is a 125-residue protein sequence, read N- to C-terminus: Scinderin (125 aa).

Tyr-13 carries the post-translational modification Phosphotyrosine. Residues 23-30 and 49-57 each bind a 1,2-diacyl-sn-glycero-3-phospho-(1D-myo-inositol-4,5-bisphosphate); these read KGGLKYKA and RLLHVKGRR. Residues 59–99 form a Gelsolin-like 1 repeat; sequence VRATEVPLSWDSFNKGDCFIIDLGSEIYQWFGSSCNKYERL.

Belongs to the villin/gelsolin family.

It localises to the cytoplasm. Its subcellular location is the cytoskeleton. The protein resides in the cell projection. The protein localises to the podosome. Its function is as follows. Ca(2+)-dependent actin filament-severing protein that has a regulatory function in exocytosis by affecting the organization of the microfilament network underneath the plasma membrane. In vitro, also has barbed end capping and nucleating activities in the presence of Ca(2+). Severing activity is inhibited by phosphatidylinositol 4,5-bis-phosphate (PIP2). Required for megakaryocyte differentiation, maturation, polyploidization and apoptosis with the release of platelet-like particles. Plays a role in osteoclastogenesis (OCG) and actin cytoskeletal organization in osteoclasts. Regulates chondrocyte proliferation and differentiation. Inhibits cell proliferation and tumorigenesis. Signaling is mediated by MAPK, p38 and JNK pathways. This Sus scrofa (Pig) protein is Scinderin (SCIN).